Consider the following 711-residue polypeptide: Polyribonucleotide nucleotidyltransferase (711 aa).

Mg(2+) contacts are provided by aspartate 490 and aspartate 496. The 63-residue stretch at 557–619 (PRIETMTIPK…KCIDDAMRII (63 aa)) folds into the KH domain. An S1 motif domain is found at 629-699 (GEVYVGKVRS…KTGKFKLSHK (71 aa)).

It belongs to the polyribonucleotide nucleotidyltransferase family. It depends on Mg(2+) as a cofactor.

Its subcellular location is the cytoplasm. The enzyme catalyses RNA(n+1) + phosphate = RNA(n) + a ribonucleoside 5'-diphosphate. In terms of biological role, involved in mRNA degradation. Catalyzes the phosphorolysis of single-stranded polyribonucleotides processively in the 3'- to 5'-direction. The polypeptide is Polyribonucleotide nucleotidyltransferase (Phocaeicola vulgatus (strain ATCC 8482 / DSM 1447 / JCM 5826 / CCUG 4940 / NBRC 14291 / NCTC 11154) (Bacteroides vulgatus)).